Here is a 303-residue protein sequence, read N- to C-terminus: UDP-3-O-acyl-N-acetylglucosamine deacetylase (303 aa).

Zn(2+) contacts are provided by His-79, His-238, and Asp-242. His-265 (proton donor) is an active-site residue.

This sequence belongs to the LpxC family. It depends on Zn(2+) as a cofactor.

The catalysed reaction is a UDP-3-O-[(3R)-3-hydroxyacyl]-N-acetyl-alpha-D-glucosamine + H2O = a UDP-3-O-[(3R)-3-hydroxyacyl]-alpha-D-glucosamine + acetate. It functions in the pathway glycolipid biosynthesis; lipid IV(A) biosynthesis; lipid IV(A) from (3R)-3-hydroxytetradecanoyl-[acyl-carrier-protein] and UDP-N-acetyl-alpha-D-glucosamine: step 2/6. Functionally, catalyzes the hydrolysis of UDP-3-O-myristoyl-N-acetylglucosamine to form UDP-3-O-myristoylglucosamine and acetate, the committed step in lipid A biosynthesis. This is UDP-3-O-acyl-N-acetylglucosamine deacetylase from Pseudoalteromonas translucida (strain TAC 125).